A 172-amino-acid polypeptide reads, in one-letter code: uncharacterized protein (172 aa).

The disordered stretch occupies residues 22 to 64 (RSVSSSPAAKQPAPGTVAQSFPPGELALRDETGGRGRGTRGIR).

This is an uncharacterized protein from Human cytomegalovirus (strain AD169) (HHV-5).